The primary structure comprises 340 residues: GTPase Obg (340 aa).

The Obg domain maps to 1 to 159; that stretch reads MDFIDEVKLY…KYVVLKLKVL (159 aa). An OBG-type G domain is found at 160-329; sequence SDVGIIGMPN…LNEKLKKGSS (170 aa). GTP-binding positions include 166–173, 191–195, 212–215, 279–282, and 310–312; these read GMPNAGKS, FTTIK, DIPG, NKCD, and GED. Mg(2+)-binding residues include Ser173 and Thr193.

Belongs to the TRAFAC class OBG-HflX-like GTPase superfamily. OBG GTPase family. As to quaternary structure, monomer. Mg(2+) is required as a cofactor.

The protein localises to the cytoplasm. Its function is as follows. An essential GTPase which binds GTP, GDP and possibly (p)ppGpp with moderate affinity, with high nucleotide exchange rates and a fairly low GTP hydrolysis rate. Plays a role in control of the cell cycle, stress response, ribosome biogenesis and in those bacteria that undergo differentiation, in morphogenesis control. The polypeptide is GTPase Obg (Wolbachia sp. subsp. Brugia malayi (strain TRS)).